The chain runs to 534 residues: EH domain-containing protein 1 (534 aa).

The residue at position 1 (methionine 1) is an N-acetylmethionine. A Dynamin-type G domain is found at 55 to 286 (FDNKPMVLLV…DLFKDIQSLP (232 aa)). The segment at 65–72 (GQYSTGKT) is G1 motif. ATP is bound at residue 65-72 (GQYSTGKT). Residues 91 to 92 (EP) form a G2 motif region. A G3 motif region spans residues 153–156 (DTPG). Residues 198–227 (DEFSEVIKALKNHEDKIRVVLNKADQIETQ) adopt a coiled-coil conformation. Residues 219–222 (NKAD) form a G4 motif region. Lysine 220 serves as a coordination point for ATP. Isoleucine 243 is a region of interest (G5 motif). Tryptophan 258 is a binding site for ATP. A phosphoserine mark is found at serine 355 and serine 456. An EH domain is found at 444-532 (DKPTYDEIFY…PHLIPPSKRR (89 aa)). The region spanning 476–511 (LPNTVLGKIWKLADVDKDGLLDDEEFALANHLIKVK) is the EF-hand domain. Aspartate 489, aspartate 491, aspartate 493, and glutamate 500 together coordinate Ca(2+).

This sequence belongs to the TRAFAC class dynamin-like GTPase superfamily. Dynamin/Fzo/YdjA family. EHD subfamily. In terms of assembly, homooligomer, and heterooligomer with EHD2, EHD3 and EHD4, ATP-binding is required for heterooligomerization. Interacts (via EH domain) with MICALL1 (via NPF1 motif); the interaction is direct and recruits EHD1 to membranes. Interacts with RAB35; the interaction is indirect through MICALL1 and recruits EHD1 to membranes. Interacts (via EH domain) with PACSIN2 (via NPF motifs); regulates localization to tubular recycling endosome membranes. Interacts with PACSIN1. Interacts with RAB8A. Interacts with FER1L5 (via second C2 domain). Interacts with MYOF. Interacts with ZFYVE20. Interacts (via EH domain) with RAB11FIP2.

It is found in the recycling endosome membrane. The protein localises to the early endosome membrane. It localises to the cell membrane. The protein resides in the cell projection. Its subcellular location is the cilium membrane. Its function is as follows. ATP- and membrane-binding protein that controls membrane reorganization/tubulation upon ATP hydrolysis. In vitro causes vesiculation of endocytic membranes. Acts in early endocytic membrane fusion and membrane trafficking of recycling endosomes. Recruited to endosomal membranes upon nerve growth factor stimulation, indirectly regulates neurite outgrowth. Plays a role in myoblast fusion. Involved in the unidirectional retrograde dendritic transport of endocytosed BACE1 and in efficient sorting of BACE1 to axons implicating a function in neuronal APP processing. Plays a role in the formation of the ciliary vesicle (CV), an early step in cilium biogenesis. Proposed to be required for the fusion of distal appendage vesicles (DAVs) to form the CV by recruiting SNARE complex component SNAP29. Is required for recruitment of transition zone proteins CEP290, RPGRIP1L, TMEM67 and B9D2, and of IFT20 following DAV reorganization before Rab8-dependent ciliary membrane extension. Required for the loss of CCP110 form the mother centriole essential for the maturation of the basal body during ciliogenesis. The chain is EH domain-containing protein 1 from Rattus norvegicus (Rat).